A 492-amino-acid chain; its full sequence is Cysteine--tRNA ligase (492 aa).

Residue Cys-31 coordinates Zn(2+). The short motif at 33–43 (PTVYGDPHLGH) is the 'HIGH' region element. Residues Cys-226, His-251, and Glu-255 each contribute to the Zn(2+) site. A 'KMSKS' region motif is present at residues 283 to 287 (KMGKS). Residue Lys-286 coordinates ATP.

It belongs to the class-I aminoacyl-tRNA synthetase family. Monomer. It depends on Zn(2+) as a cofactor.

It is found in the cytoplasm. It catalyses the reaction tRNA(Cys) + L-cysteine + ATP = L-cysteinyl-tRNA(Cys) + AMP + diphosphate. This Azobacteroides pseudotrichonymphae genomovar. CFP2 protein is Cysteine--tRNA ligase.